The following is a 293-amino-acid chain: Fructose-bisphosphate aldolase (293 aa).

Residue serine 50 participates in D-glyceraldehyde 3-phosphate binding. Aspartate 85 (proton donor) is an active-site residue. Residues histidine 86, aspartate 106, glutamate 136, and histidine 178 each coordinate Zn(2+). Residue glycine 179 coordinates dihydroxyacetone phosphate. Histidine 208 provides a ligand contact to Zn(2+). Dihydroxyacetone phosphate is bound by residues 209 to 211 (GGS) and 230 to 233 (NVNT).

Belongs to the class II fructose-bisphosphate aldolase family. Zn(2+) is required as a cofactor.

The enzyme catalyses beta-D-fructose 1,6-bisphosphate = D-glyceraldehyde 3-phosphate + dihydroxyacetone phosphate. Its pathway is carbohydrate degradation; glycolysis; D-glyceraldehyde 3-phosphate and glycerone phosphate from D-glucose: step 4/4. Catalyzes the aldol condensation of dihydroxyacetone phosphate (DHAP or glycerone-phosphate) with glyceraldehyde 3-phosphate (G3P) to form fructose 1,6-bisphosphate (FBP) in gluconeogenesis and the reverse reaction in glycolysis. The protein is Fructose-bisphosphate aldolase (fba) of Streptococcus pyogenes serotype M6 (strain ATCC BAA-946 / MGAS10394).